The chain runs to 287 residues: Inorganic pyrophosphatase (287 aa).

At Thr65 the chain carries Phosphothreonine. Arg79 contacts diphosphate. The active-site Proton donor is the Tyr90. Mg(2+)-binding residues include Asp116, Asp121, and Asp153. Lys239 participates in a covalent cross-link: Glycyl lysine isopeptide (Lys-Gly) (interchain with G-Cter in ubiquitin). Phosphothreonine is present on Thr251. Ser266 bears the Phosphoserine mark. Lys279 is covalently cross-linked (Glycyl lysine isopeptide (Lys-Gly) (interchain with G-Cter in ubiquitin)). Ser286 is subject to Phosphoserine.

Belongs to the PPase family. As to quaternary structure, homodimer. Requires Mg(2+) as cofactor.

The protein localises to the cytoplasm. The enzyme catalyses diphosphate + H2O = 2 phosphate + H(+). The sequence is that of Inorganic pyrophosphatase (IPP1) from Saccharomyces cerevisiae (strain ATCC 204508 / S288c) (Baker's yeast).